Reading from the N-terminus, the 272-residue chain is SKA complex subunit 1 homolog (272 aa).

Residues 48-75 (ALSSMELQVQSIKDRLREETEAIPKAKK) are a coiled coil.

This sequence belongs to the SKA1 family.

This chain is SKA complex subunit 1 homolog, found in Arabidopsis thaliana (Mouse-ear cress).